A 474-amino-acid chain; its full sequence is L-arabinose isomerase (474 aa).

The Mn(2+) site is built by E306, E331, H348, and H447.

Belongs to the arabinose isomerase family. The cofactor is Mn(2+).

It carries out the reaction beta-L-arabinopyranose = L-ribulose. The protein operates within carbohydrate degradation; L-arabinose degradation via L-ribulose; D-xylulose 5-phosphate from L-arabinose (bacterial route): step 1/3. Functionally, catalyzes the conversion of L-arabinose to L-ribulose. The polypeptide is L-arabinose isomerase (Levilactobacillus brevis (strain ATCC 367 / BCRC 12310 / CIP 105137 / JCM 1170 / LMG 11437 / NCIMB 947 / NCTC 947) (Lactobacillus brevis)).